We begin with the raw amino-acid sequence, 1416 residues long: Gag-Pro-Pol polyprotein (1416 aa).

Residue Gly2 is the site of N-myristoyl glycine; by host attachment. Residues Pro100–Tyr103 carry the PPXY motif motif. CCHC-type zinc fingers lie at residues Gly345–Thr362 and Gly370–Thr387. The Peptidase A2 domain maps to Ala447–Val525. The active-site Protease; shared with dimeric partner is Asp452. One can recognise a Reverse transcriptase domain in the interval Leu586–Val776. Asp652, Asp727, Asp728, Asp1005, Glu1036, Asp1057, Asp1118, Asp1190, and Asp1247 together coordinate Mg(2+). Residues Ile996 to Pro1126 enclose the RNase H type-1 domain. The Integrase catalytic domain occupies Arg1179–Gly1343. Positions Lys1352–Cys1400 form a DNA-binding region, integrase-type.

This sequence belongs to the retroviral Pol polyprotein family. Homodimer; the homodimers are part of the immature particles. Interacts with human TSG101 and NEDD4; these interactions are essential for budding and release of viral particles. As to quaternary structure, homodimer; further assembles as homohexamers. It depends on Mg(2+) as a cofactor. In terms of processing, phosphorylation of the matrix protein p15 by MAPK1 seems to play a role in budding. Myristoylated. Myristoylation of the matrix (MA) domain mediates the transport and binding of Gag polyproteins to the host plasma membrane and is required for the assembly of viral particles. Post-translationally, specific enzymatic cleavages by the viral protease yield mature proteins. The polyprotein is cleaved during and after budding, this process is termed maturation. The protease is autoproteolytically processed at its N- and C-termini.

Its subcellular location is the virion. The enzyme catalyses Endonucleolytic cleavage to 5'-phosphomonoester.. The catalysed reaction is DNA(n) + a 2'-deoxyribonucleoside 5'-triphosphate = DNA(n+1) + diphosphate. The matrix domain targets Gag, Gag-Pro and Gag-Pro-Pol polyproteins to the plasma membrane via a multipartite membrane binding signal, that includes its myristoylated N-terminus. Its function is as follows. Matrix protein. In terms of biological role, forms the spherical core of the virus that encapsulates the genomic RNA-nucleocapsid complex. Functionally, binds strongly to viral nucleic acids and promote their aggregation. Also destabilizes the nucleic acids duplexes via highly structured zinc-binding motifs. The aspartyl protease mediates proteolytic cleavages of Gag and Gag-Pol polyproteins during or shortly after the release of the virion from the plasma membrane. Cleavages take place as an ordered, step-wise cascade to yield mature proteins. This process is called maturation. Displays maximal activity during the budding process just prior to particle release from the cell. Its function is as follows. RT is a multifunctional enzyme that converts the viral RNA genome into dsDNA in the cytoplasm, shortly after virus entry into the cell. This enzyme displays a DNA polymerase activity that can copy either DNA or RNA templates, and a ribonuclease H (RNase H) activity that cleaves the RNA strand of RNA-DNA heteroduplexes in a partially processive 3' to 5'-endonucleasic mode. Conversion of viral genomic RNA into dsDNA requires many steps. A tRNA-Pro binds to the primer-binding site (PBS) situated at the 5'-end of the viral RNA. RT uses the 3' end of the tRNA primer to perform a short round of RNA-dependent minus-strand DNA synthesis. The reading proceeds through the U5 region and ends after the repeated (R) region which is present at both ends of viral RNA. The portion of the RNA-DNA heteroduplex is digested by the RNase H, resulting in a ssDNA product attached to the tRNA primer. This ssDNA/tRNA hybridizes with the identical R region situated at the 3' end of viral RNA. This template exchange, known as minus-strand DNA strong stop transfer, can be either intra- or intermolecular. RT uses the 3' end of this newly synthesized short ssDNA to perform the RNA-dependent minus-strand DNA synthesis of the whole template. RNase H digests the RNA template except for a polypurine tract (PPT) situated at the 5' end of the genome. It is not clear if both polymerase and RNase H activities are simultaneous. RNase H probably can proceed both in a polymerase-dependent (RNA cut into small fragments by the same RT performing DNA synthesis) and a polymerase-independent mode (cleavage of remaining RNA fragments by free RTs). Secondly, RT performs DNA-directed plus-strand DNA synthesis using the PPT that has not been removed by RNase H as primer. PPT and tRNA primers are then removed by RNase H. The 3' and 5' ssDNA PBS regions hybridize to form a circular dsDNA intermediate. Strand displacement synthesis by RT to the PBS and PPT ends produces a blunt ended, linear dsDNA copy of the viral genome that includes long terminal repeats (LTRs) at both ends. In terms of biological role, catalyzes viral DNA integration into the host chromosome, by performing a series of DNA cutting and joining reactions. The protein is Gag-Pro-Pol polyprotein (pol) of Bos taurus (Bovine).